A 488-amino-acid chain; its full sequence is NADH-ubiquinone oxidoreductase chain 2 (488 aa).

Transmembrane regions (helical) follow at residues Met11–Ile31, Met38–Ile58, Glu74–Phe94, Ile106–Glu126, Asn129–Leu149, Leu162–Ile182, Ile211–Leu231, Gly239–Ile259, Ile271–Val291, Val299–Val319, Ile331–Val351, Ile376–Phe396, Ile412–Lys434, and Ile460–Ile480.

Belongs to the complex I subunit 2 family.

Its subcellular location is the mitochondrion inner membrane. The catalysed reaction is a ubiquinone + NADH + 5 H(+)(in) = a ubiquinol + NAD(+) + 4 H(+)(out). Functionally, core subunit of the mitochondrial membrane respiratory chain NADH dehydrogenase (Complex I) that is believed to belong to the minimal assembly required for catalysis. Complex I functions in the transfer of electrons from NADH to the respiratory chain. The immediate electron acceptor for the enzyme is believed to be ubiquinone. This chain is NADH-ubiquinone oxidoreductase chain 2 (nad2), found in Dictyostelium discoideum (Social amoeba).